Consider the following 546-residue polypeptide: Chaperonin GroEL (546 aa).

ATP contacts are provided by residues 29–32, lysine 50, 86–90, glycine 414, and aspartate 492; these read TMGP and DGTTT.

It belongs to the chaperonin (HSP60) family. In terms of assembly, forms a cylinder of 14 subunits composed of two heptameric rings stacked back-to-back. Interacts with the co-chaperonin GroES.

Its subcellular location is the cytoplasm. It catalyses the reaction ATP + H2O + a folded polypeptide = ADP + phosphate + an unfolded polypeptide.. In terms of biological role, together with its co-chaperonin GroES, plays an essential role in assisting protein folding. The GroEL-GroES system forms a nano-cage that allows encapsulation of the non-native substrate proteins and provides a physical environment optimized to promote and accelerate protein folding. The chain is Chaperonin GroEL from Helicobacter pylori (strain Shi470).